The chain runs to 223 residues: Voltage-dependent calcium channel gamma-1 subunit (223 aa).

Residues 1–10 are Cytoplasmic-facing; that stretch reads MSQTKTAKVR. The helical transmembrane segment at 11–29 threads the bilayer; the sequence is VTLFFILAGGVLAMVAVVT. Residues 30 to 109 are Extracellular-facing; the sequence is DHWAVLSPHL…TQKEYSISAA (80 aa). Asn-43 and Asn-80 each carry an N-linked (GlcNAc...) asparagine glycan. Cys-57 and Cys-81 are joined by a disulfide. Residues 110–130 traverse the membrane as a helical segment; it reads AIAIFSLGFIIIGSICAFLSF. Topologically, residues 131 to 135 are cytoplasmic; that stretch reads GNKRD. A helical membrane pass occupies residues 136–156; sequence YLLRPASMFYAFAGLCLIVSV. The Extracellular portion of the chain corresponds to 157 to 180; that stretch reads EVMRQSVKRMIDSEDTVWIEYYYS. Residues 181-205 form a helical membrane-spanning segment; that stretch reads WSFACACAGFTLLFLGGLFLLLFSL. Residues 206–223 lie on the Cytoplasmic side of the membrane; that stretch reads PRMPQNPWESCMDTESEH.

It belongs to the PMP-22/EMP/MP20 family. CACNG subfamily. Component of a calcium channel complex consisting of a pore-forming alpha subunit (CACNA1S) and the ancillary subunits CACNB1 or CACNB2, CACNG1 and CACNA2D1. The channel complex contains alpha, beta, gamma and delta subunits in a 1:1:1:1 ratio, i.e. it contains either CACNB1 or CACNB2. In terms of processing, N-glycosylated. As to expression, skeletal muscle.

The protein resides in the cell membrane. Its subcellular location is the sarcolemma. Regulatory subunit of the voltage-gated calcium channel that gives rise to L-type calcium currents in skeletal muscle. Regulates channel inactivation kinetics. In Rattus norvegicus (Rat), this protein is Voltage-dependent calcium channel gamma-1 subunit (Cacng1).